We begin with the raw amino-acid sequence, 339 residues long: Cathepsin B (339 aa).

The signal sequence occupies residues 1–17 (MWWLWASLCCLLALGDA). A propeptide spans 18 to 79 (RSRPSFHPLS…QRVMFTEDLK (62 aa)) (activation peptide). 6 cysteine pairs are disulfide-bonded: cysteine 93/cysteine 122, cysteine 105/cysteine 150, cysteine 141/cysteine 207, cysteine 142/cysteine 146, cysteine 179/cysteine 211, and cysteine 187/cysteine 198. Cysteine 108 is a catalytic residue. An N-linked (GlcNAc...) asparagine glycan is attached at asparagine 192. Lysine 220 carries the N6-acetyllysine modification. Residues histidine 278 and asparagine 298 contribute to the active site. Positions 334 to 339 (QYWEKI) are excised as a propeptide.

It belongs to the peptidase C1 family. As to quaternary structure, dimer of a heavy chain and a light chain cross-linked by a disulfide bond. Interacts with SRPX2. Directly interacts with SHKBP1.

Its subcellular location is the lysosome. It is found in the melanosome. The protein localises to the secreted. It localises to the extracellular space. The protein resides in the apical cell membrane. The catalysed reaction is Hydrolysis of proteins with broad specificity for peptide bonds. Preferentially cleaves -Arg-Arg-|-Xaa bonds in small molecule substrates (thus differing from cathepsin L). In addition to being an endopeptidase, shows peptidyl-dipeptidase activity, liberating C-terminal dipeptides.. Functionally, thiol protease which is believed to participate in intracellular degradation and turnover of proteins. Cleaves matrix extracellular phosphoglycoprotein MEPE. Involved in the solubilization of cross-linked TG/thyroglobulin in the thyroid follicle lumen. Has also been implicated in tumor invasion and metastasis. The sequence is that of Cathepsin B (CTSB) from Macaca fascicularis (Crab-eating macaque).